We begin with the raw amino-acid sequence, 829 residues long: ATP-dependent RNA helicase drs1 (829 aa).

Disordered stretches follow at residues 1–96 and 145–295; these read MAPS…MDTE and RRER…MSSF. Residues 20–32 show a composition bias toward acidic residues; it reads DNEEDIPLEEEQE. The segment covering 48–59 has biased composition (basic residues); sequence KQKKKNNKKSKK. Over residues 63–78 the composition is skewed to acidic residues; sequence TEDDDDEAETKEDDAA. Over residues 150-163 the composition is skewed to basic and acidic residues; it reads AAKEGKTTATKEEE. Composition is skewed to acidic residues over residues 164–190, 218–228, 235–246, and 258–271; these read DKME…DGVL, DGEDEDSEGED, DEDEGDASDDDS, and QSSD…EEEE. Residues 272–291 show a composition bias toward basic and acidic residues; the sequence is AKMKEFFAPEEENQPKKKGE. The Q motif motif lies at 293–321; sequence SSFQEMSLSRPILRGLTSVGFTKPTPIQA. Residues 324–498 form the Helicase ATP-binding domain; sequence IPISLMGKDV…RAGLNKPVRI (175 aa). 337–344 provides a ligand contact to ATP; sequence AVTGSGKT. Positions 446–449 match the DEAD box motif; it reads DEAD. Positions 528-707 constitute a Helicase C-terminal domain; that stretch reads YLLHICKTIY…EKQLQNMEMQ (180 aa). A disordered region spans residues 728-829; that stretch reads TWFETQEDKK…KGGKGKGRRK (102 aa). Over residues 749 to 791 the composition is skewed to basic and acidic residues; sequence GVRDKLKSKNEGKLSNKDRKKLDTMQERKQERTYKKGSAERAG. The segment covering 800–815 has biased composition (basic residues); sequence KVVKKVGRSAGPKKKG.

This sequence belongs to the DEAD box helicase family. DDX27/DRS1 subfamily. As to quaternary structure, associates with pre-ribosomal particles.

Its subcellular location is the nucleus. The protein localises to the nucleolus. It carries out the reaction ATP + H2O = ADP + phosphate + H(+). Functionally, ATP-binding RNA helicase involved in ribosome assembly. In Neurospora crassa (strain ATCC 24698 / 74-OR23-1A / CBS 708.71 / DSM 1257 / FGSC 987), this protein is ATP-dependent RNA helicase drs1 (drh-11).